An 897-amino-acid polypeptide reads, in one-letter code: Isoleucine--tRNA ligase (897 aa).

The 'HIGH' region motif lies at 59–69 (PYANGDIHVGH). E553 contributes to the L-isoleucyl-5'-AMP binding site. Positions 594-598 (KMSKS) match the 'KMSKS' region motif. K597 serves as a coordination point for ATP. Residues C866, C869, C883, and C886 each coordinate Zn(2+).

It belongs to the class-I aminoacyl-tRNA synthetase family. IleS type 1 subfamily. Monomer. It depends on Zn(2+) as a cofactor.

The protein localises to the cytoplasm. It carries out the reaction tRNA(Ile) + L-isoleucine + ATP = L-isoleucyl-tRNA(Ile) + AMP + diphosphate. Its function is as follows. Catalyzes the attachment of isoleucine to tRNA(Ile). As IleRS can inadvertently accommodate and process structurally similar amino acids such as valine, to avoid such errors it has two additional distinct tRNA(Ile)-dependent editing activities. One activity is designated as 'pretransfer' editing and involves the hydrolysis of activated Val-AMP. The other activity is designated 'posttransfer' editing and involves deacylation of mischarged Val-tRNA(Ile). This is Isoleucine--tRNA ligase from Mycoplasmopsis synoviae (strain 53) (Mycoplasma synoviae).